The chain runs to 145 residues: Brain and acute leukemia cytoplasmic protein (145 aa).

Gly-2 carries N-myristoyl glycine lipidation. Residue Cys-3 is the site of S-palmitoyl cysteine attachment. An interaction with CAMK2A region spans residues 3–35 (CGGSRADAIEPRYYESWTRETESTWLTYTDSDA). A disordered region spans residues 27–119 (WLTYTDSDAP…AKRDAKRMPA (93 aa)). Positions 32-46 (DSDAPPSAAAPDSGP) are enriched in low complexity. Polar residues predominate over residues 83-108 (CETQCPNPQSLSSGPLTQKQNGLQTT). Over residues 109-119 (EAKRDAKRMPA) the composition is skewed to basic and acidic residues.

In terms of assembly, interacts with CAMK2A. In terms of processing, palmitoylation and myristoylation target the protein to the lipid rafts. In terms of tissue distribution, predominantly expressed in neuroectoderm-derived tissues. Expressed in the brain and spinal cord, and at low levels, in the adrenal gland. In the bone marrow, confined to the CD34+ progenitor cells. Not found in peripheral blood mononuclear cells, nor lymph nodes. Tends to be expressed at high levels in acute myeloid leukemia and glioblastoma cells.

It localises to the cytoplasm. The protein resides in the synapse. It is found in the synaptosome. Its subcellular location is the membrane raft. The protein localises to the postsynaptic density. May play a synaptic role at the postsynaptic lipid rafts possibly through interaction with CAMK2A. In Homo sapiens (Human), this protein is Brain and acute leukemia cytoplasmic protein.